Here is a 141-residue protein sequence, read N- to C-terminus: Nucleoside diphosphate kinase (141 aa).

Lysine 11, phenylalanine 59, arginine 87, threonine 93, arginine 104, and asparagine 114 together coordinate ATP. Residue histidine 117 is the Pros-phosphohistidine intermediate of the active site.

It belongs to the NDK family. In terms of assembly, homotetramer. It depends on Mg(2+) as a cofactor.

It localises to the cytoplasm. It catalyses the reaction a 2'-deoxyribonucleoside 5'-diphosphate + ATP = a 2'-deoxyribonucleoside 5'-triphosphate + ADP. The enzyme catalyses a ribonucleoside 5'-diphosphate + ATP = a ribonucleoside 5'-triphosphate + ADP. Major role in the synthesis of nucleoside triphosphates other than ATP. The ATP gamma phosphate is transferred to the NDP beta phosphate via a ping-pong mechanism, using a phosphorylated active-site intermediate. This Janthinobacterium sp. (strain Marseille) (Minibacterium massiliensis) protein is Nucleoside diphosphate kinase.